The sequence spans 169 residues: MSQDFVEIAKIGATYKLNGELNLYSLANSIETLLSYGDWYIQLPATNVWQQLKGESVLKRADKVYIKLANINNADTAKKYVNALIGVPKRALPQLAEDEVYFKDLIGCSVKNINNDSFGVVVDIIETGANEVLVCKEDNSEYLIPYVKQYIVSEDLNSKKIVVDWEYDY.

In terms of domain architecture, PRC barrel spans 97–169 (EDEVYFKDLI…KIVVDWEYDY (73 aa)).

The protein belongs to the RimM family. In terms of assembly, binds ribosomal protein uS19.

Its subcellular location is the cytoplasm. Its function is as follows. An accessory protein needed during the final step in the assembly of 30S ribosomal subunit, possibly for assembly of the head region. Essential for efficient processing of 16S rRNA. May be needed both before and after RbfA during the maturation of 16S rRNA. It has affinity for free ribosomal 30S subunits but not for 70S ribosomes. In Francisella tularensis subsp. tularensis (strain WY96-3418), this protein is Ribosome maturation factor RimM.